Reading from the N-terminus, the 701-residue chain is 1,4-alpha-glucan branching enzyme GlgB (701 aa).

D381 acts as the Nucleophile in catalysis. E434 serves as the catalytic Proton donor.

This sequence belongs to the glycosyl hydrolase 13 family. GlgB subfamily. In terms of assembly, monomer.

The enzyme catalyses Transfers a segment of a (1-&gt;4)-alpha-D-glucan chain to a primary hydroxy group in a similar glucan chain.. The protein operates within glycan biosynthesis; glycogen biosynthesis. Catalyzes the formation of the alpha-1,6-glucosidic linkages in glycogen by scission of a 1,4-alpha-linked oligosaccharide from growing alpha-1,4-glucan chains and the subsequent attachment of the oligosaccharide to the alpha-1,6 position. The protein is 1,4-alpha-glucan branching enzyme GlgB of Jannaschia sp. (strain CCS1).